Reading from the N-terminus, the 442-residue chain is Ribosomal protein uS12 methylthiotransferase RimO (442 aa).

Residues 9 to 119 (PRIGFVSLGC…VLSHVHQYVP (111 aa)) enclose the MTTase N-terminal domain. 6 residues coordinate [4Fe-4S] cluster: cysteine 18, cysteine 54, cysteine 83, cysteine 151, cysteine 155, and cysteine 158. Positions 137-375 (LTPRHYAYLK…QLQQAISTQR (239 aa)) constitute a Radical SAM core domain. The TRAM domain maps to 377–442 (QDKIGREVLV…DEYDLWGSRV (66 aa)).

The protein belongs to the methylthiotransferase family. RimO subfamily. Requires [4Fe-4S] cluster as cofactor.

It localises to the cytoplasm. It carries out the reaction L-aspartate(89)-[ribosomal protein uS12]-hydrogen + (sulfur carrier)-SH + AH2 + 2 S-adenosyl-L-methionine = 3-methylsulfanyl-L-aspartate(89)-[ribosomal protein uS12]-hydrogen + (sulfur carrier)-H + 5'-deoxyadenosine + L-methionine + A + S-adenosyl-L-homocysteine + 2 H(+). In terms of biological role, catalyzes the methylthiolation of an aspartic acid residue of ribosomal protein uS12. This is Ribosomal protein uS12 methylthiotransferase RimO from Pectobacterium atrosepticum (strain SCRI 1043 / ATCC BAA-672) (Erwinia carotovora subsp. atroseptica).